A 125-amino-acid chain; its full sequence is uncharacterized protein (125 aa).

Residues 14 to 112 (CPVEFTLDVI…WGESNRDVLE (99 aa)) enclose the HTH hxlR-type domain.

This is an uncharacterized protein from Bacillus subtilis (strain 168).